Consider the following 319-residue polypeptide: Putative protein phosphatase 2C 23 (319 aa).

One can recognise a PPM-type phosphatase domain in the interval 73-314 (AVRMESASCY…DDITVVVACI (242 aa)). Glycine 102, aspartate 235, and aspartate 305 together coordinate Mn(2+).

Belongs to the PP2C family. Mg(2+) is required as a cofactor.

It carries out the reaction O-phospho-L-seryl-[protein] + H2O = L-seryl-[protein] + phosphate. The enzyme catalyses O-phospho-L-threonyl-[protein] + H2O = L-threonyl-[protein] + phosphate. The polypeptide is Putative protein phosphatase 2C 23 (Oryza sativa subsp. japonica (Rice)).